The sequence spans 169 residues: Small ribosomal subunit protein uS5c (169 aa).

Residues Trp-17–Val-80 form the S5 DRBM domain.

This sequence belongs to the universal ribosomal protein uS5 family. As to quaternary structure, part of the 30S ribosomal subunit. Contacts protein S4.

The protein resides in the plastid. It is found in the cyanelle. Functionally, with S4 and S12 plays an important role in translational accuracy. This Cyanophora paradoxa protein is Small ribosomal subunit protein uS5c (rps5).